A 625-amino-acid chain; its full sequence is DNA mismatch repair protein MutL (625 aa).

It belongs to the DNA mismatch repair MutL/HexB family.

In terms of biological role, this protein is involved in the repair of mismatches in DNA. It is required for dam-dependent methyl-directed DNA mismatch repair. May act as a 'molecular matchmaker', a protein that promotes the formation of a stable complex between two or more DNA-binding proteins in an ATP-dependent manner without itself being part of a final effector complex. This chain is DNA mismatch repair protein MutL, found in Xanthomonas axonopodis pv. citri (strain 306).